The primary structure comprises 72 residues: GFYFRSIQGFYFKRIQGNICSEPKKVGRCRGSFPRFYFDSETGKCTPFIYGGCGGNGNNFETLRRCRAICRA.

Positions 1 to 14 (GFYFRSIQGFYFKR) are cleaved as a signal peptide. Positions 20–70 (CSEPKKVGRCRGSFPRFYFDSETGKCTPFIYGGCGGNGNNFETLRRCRAIC) constitute a BPTI/Kunitz inhibitor domain. Cystine bridges form between cysteine 20–cysteine 70, cysteine 29–cysteine 53, and cysteine 45–cysteine 66.

Belongs to the venom Kunitz-type family. Sea anemone type 2 potassium channel toxin subfamily.

Its subcellular location is the secreted. It localises to the nematocyst. Functionally, serine protease inhibitor that inhibits trypsin (Ki=50 nM). This protease exhibits a pronounced neuroprotective activity on Alzheimer's disease model. It enhances cell viability by 39.4% when neuroblastoma cells are in presence of the toxin component beta-amyloid, but has no effect when these cells are in presence of 6-OHDA. It induces an effective decrease of reactive oxygen species (ROS) level in the cells treated with oxidative stress inducers. It also protects these cells by inhibiting ATP-induced purinoceptor activation. Its binding affinity to P2RX7 is moderate (Kd=43.3 uM). The sequence is that of PI-stichotoxin-Hmg3d from Heteractis magnifica (Magnificent sea anemone).